The sequence spans 277 residues: Bis(5'-nucleosyl)-tetraphosphatase, symmetrical (277 aa).

Belongs to the Ap4A hydrolase family.

The enzyme catalyses P(1),P(4)-bis(5'-adenosyl) tetraphosphate + H2O = 2 ADP + 2 H(+). In terms of biological role, hydrolyzes diadenosine 5',5'''-P1,P4-tetraphosphate to yield ADP. The chain is Bis(5'-nucleosyl)-tetraphosphatase, symmetrical from Bordetella bronchiseptica (strain ATCC BAA-588 / NCTC 13252 / RB50) (Alcaligenes bronchisepticus).